Here is a 353-residue protein sequence, read N- to C-terminus: MDLEASLLPTGPNASNTSDGPDNLTSAGPPPRTGSISYVNIIMPSVFGTICLLGIIGNSMVIFAVVKKSKLHWFSNVPDIFIINLSVVDLLFLLGMPFMIHQLMGNGVWHFGETMCTLITAMDANSQFTSTYILTAMAIDRYLATVHPISSTRFRKPSVATLVICLLWALSIISITPVWLYARLIPFPGGTVGCGIRLPNPDTDLYWFTLYQFFLAFALPFVVITAAYVRILQRMTSSVAPASQRSIRLRTKRVTRTAIAICLVFFVCWAPYYVLQLTQLSISRPTLTFVYLYNAAISLGYANSCLNPFVYIVLCETFRKRLVLSVKPAAQGQLRAVSNAQTAEEERTESKGT.

Positions M1–G28 are disordered. Residues M1–S45 lie on the Extracellular side of the membrane. Positions P12–S26 are enriched in polar residues. 3 N-linked (GlcNAc...) asparagine glycosylation sites follow: N13, N16, and N23. Residues V46–V66 form a helical membrane-spanning segment. Residues K67–D79 lie on the Cytoplasmic side of the membrane. The helical transmembrane segment at I80–I100 threads the bilayer. At H101–C116 the chain is on the extracellular side. C116 and C194 are oxidised to a cystine. The helical transmembrane segment at T117–I139 threads the bilayer. The Cytoplasmic segment spans residues D140–T161. The helical transmembrane segment at L162 to A182 threads the bilayer. Residues R183–D204 lie on the Extracellular side of the membrane. The chain crosses the membrane as a helical span at residues L205 to T225. The Cytoplasmic segment spans residues A226–R256. The helical transmembrane segment at T257–L277 threads the bilayer. Residues T278–N294 lie on the Extracellular side of the membrane. Residues A295–C315 traverse the membrane as a helical segment. The Cytoplasmic portion of the chain corresponds to E316–T353.

The protein belongs to the G-protein coupled receptor 1 family. Interacts with NCDN.

Its subcellular location is the cell membrane. Functionally, receptor for melanin-concentrating hormone, coupled to both G proteins that inhibit adenylyl cyclase and G proteins that activate phosphoinositide hydrolysis. This chain is Melanin-concentrating hormone receptor 1, found in Sus scrofa (Pig).